The following is a 93-amino-acid chain: Large ribosomal subunit protein uL23 (93 aa).

The protein belongs to the universal ribosomal protein uL23 family. Part of the 50S ribosomal subunit. Contacts protein L29, and trigger factor when it is bound to the ribosome.

In terms of biological role, one of the early assembly proteins it binds 23S rRNA. One of the proteins that surrounds the polypeptide exit tunnel on the outside of the ribosome. Forms the main docking site for trigger factor binding to the ribosome. This is Large ribosomal subunit protein uL23 from Helicobacter acinonychis (strain Sheeba).